Reading from the N-terminus, the 385-residue chain is Trans-enoyl reductase poxH (385 aa).

NADP(+) is bound at residue 64–67 (QPYS). Substrate is bound at residue 156-163 (PDPAAPPI). Residues 199–202 (STSV), 223–226 (SGTD), Tyr241, and 289–290 (LG) each bind NADP(+). 309-313 (HMAPL) is a substrate binding site. 372 to 373 (KR) contacts NADP(+).

This sequence belongs to the zinc-containing alcohol dehydrogenase family. In terms of assembly, monomer.

The protein operates within secondary metabolite biosynthesis. Trans-enoyl reductase; part of the gene cluster that mediates the biosynthesis of oxaleimides, cytotoxic compounds containing an unusual disubstituted succinimide moiety. The first step of the pathway is provided by the HR-PKS poxF that serves in a new mode of collaborative biosynthesis with the PKS-NRPS poxE, by providing the olefin containing amino acid substrate via the synthesis of an ACP-bound dec-4-enoate. The cytochrome P450 monooxygenase poxM-catalyzed oxidation at the alpha-position creates the enzyme-bound 2-hydroxydec-4-enoyl-ACP thioester, which may be prone to spontaneous hydrolysis to yield 2-hydroxydec-4-enoic acid due to increased electrophilicity of the carbonyl. 2-hydroxydec-4-enoic acid can then be further oxidized by poxM to yield the alpha-ketoacid 2-oxodec-4-enoicacid, which is reductively aminated by the aminotransferase poxL to yield (S,E)-2-aminodec-4-enoic acid. The Hybrid PKS-NRPS synthetase poxE then performs condensation between the octaketide product of its PKS modules and the amino group of (S,E)-2-aminodec-4-enoic acid which is activated and incorporated by the adenylation domain. The resulting aminoacyl product can be cyclized by the Diels-Alderase PoxQ and reductively released by the reductive (R) domain of poxE to yield an aldehyde intermediate. The released aldehyde is then substrate for a Knoevenagel condensation by the hydrolyase poxO followed by an oxidation at the 5-position of the pyrrolidone ring. The presence of the olefin from the amino acid building block allows for migration of the substituted allyl group to occur. This allylic transposition reaction takes place in a conjugate addition, semipinacol-like fashion to yield a succinimide intermediate. Iterative two-electron oxidations of the C7 methyl of the succinimide intermediate to the carboxylic acid can be catalyzed by one of two remaining cytochrome P450 monooxygenasess poxC or poxD to yield oxaleimide A. Subsequent oxidation yields the maleimide scaffold oxaleimide I. Both oxaleimide A and oxaleimide I can undergo oxidative modifications in the decalin ring to yield the series of products oxaleimides B to H. This is Trans-enoyl reductase poxH from Penicillium oxalicum (strain 114-2 / CGMCC 5302) (Penicillium decumbens).